The sequence spans 306 residues: tRNA pseudouridine synthase B (306 aa).

Aspartate 46 serves as the catalytic Nucleophile.

It belongs to the pseudouridine synthase TruB family. Type 1 subfamily.

It catalyses the reaction uridine(55) in tRNA = pseudouridine(55) in tRNA. Its function is as follows. Responsible for synthesis of pseudouridine from uracil-55 in the psi GC loop of transfer RNAs. This chain is tRNA pseudouridine synthase B, found in Gluconacetobacter diazotrophicus (strain ATCC 49037 / DSM 5601 / CCUG 37298 / CIP 103539 / LMG 7603 / PAl5).